The primary structure comprises 1369 residues: Rho guanine nucleotide exchange factor 10 (1369 aa).

A disordered region spans residues methionine 1–lysine 106. Positions asparagine 46–proline 64 are enriched in acidic residues. Residues glutamate 83–proline 100 show a composition bias toward low complexity. Position 180 is a phosphoserine (serine 180). Residues glutamate 184 to methionine 254 are disordered. The segment covering proline 196–aspartate 209 has biased composition (polar residues). Residues lysine 304–aspartate 355 are a coiled coil. Serine 379 is subject to Phosphoserine. The region spanning valine 421–arginine 608 is the DH domain. Disordered stretches follow at residues lysine 1226–glycine 1260 and glutamine 1277–leucine 1297. Over residues serine 1279 to serine 1296 the composition is skewed to low complexity. Serine 1287 carries the post-translational modification Phosphoserine. At glutamine 1338 the chain carries N5-methylglutamine.

Post-translationally, methylated at Gln-1338 by N6AMT1.

May play a role in developmental myelination of peripheral nerves. This is Rho guanine nucleotide exchange factor 10 (ARHGEF10) from Homo sapiens (Human).